The following is a 95-amino-acid chain: Aspartyl/glutamyl-tRNA(Asn/Gln) amidotransferase subunit C (95 aa).

This sequence belongs to the GatC family. Heterotrimer of A, B and C subunits.

The enzyme catalyses L-glutamyl-tRNA(Gln) + L-glutamine + ATP + H2O = L-glutaminyl-tRNA(Gln) + L-glutamate + ADP + phosphate + H(+). It carries out the reaction L-aspartyl-tRNA(Asn) + L-glutamine + ATP + H2O = L-asparaginyl-tRNA(Asn) + L-glutamate + ADP + phosphate + 2 H(+). Its function is as follows. Allows the formation of correctly charged Asn-tRNA(Asn) or Gln-tRNA(Gln) through the transamidation of misacylated Asp-tRNA(Asn) or Glu-tRNA(Gln) in organisms which lack either or both of asparaginyl-tRNA or glutaminyl-tRNA synthetases. The reaction takes place in the presence of glutamine and ATP through an activated phospho-Asp-tRNA(Asn) or phospho-Glu-tRNA(Gln). This is Aspartyl/glutamyl-tRNA(Asn/Gln) amidotransferase subunit C from Dehalococcoides mccartyi (strain ATCC BAA-2266 / KCTC 15142 / 195) (Dehalococcoides ethenogenes (strain 195)).